The chain runs to 143 residues: ATP synthase epsilon chain (143 aa).

The protein belongs to the ATPase epsilon chain family. As to quaternary structure, F-type ATPases have 2 components, CF(1) - the catalytic core - and CF(0) - the membrane proton channel. CF(1) has five subunits: alpha(3), beta(3), gamma(1), delta(1), epsilon(1). CF(0) has three main subunits: a, b and c.

It localises to the cell inner membrane. Produces ATP from ADP in the presence of a proton gradient across the membrane. This chain is ATP synthase epsilon chain, found in Dichelobacter nodosus (strain VCS1703A).